We begin with the raw amino-acid sequence, 652 residues long: DNA ligase (652 aa).

NAD(+) is bound by residues 29 to 33 (DSEYD), 78 to 79 (SL), and Glu107. The active-site N6-AMP-lysine intermediate is Lys109. Positions 130, 164, 278, and 302 each coordinate NAD(+). Residues Cys395, Cys398, Cys413, and Cys418 each coordinate Zn(2+). Residues 577–652 (VADAALSGLT…VRDEAWLESL (76 aa)) enclose the BRCT domain.

It belongs to the NAD-dependent DNA ligase family. LigA subfamily. The cofactor is Mg(2+). Mn(2+) serves as cofactor.

The enzyme catalyses NAD(+) + (deoxyribonucleotide)n-3'-hydroxyl + 5'-phospho-(deoxyribonucleotide)m = (deoxyribonucleotide)n+m + AMP + beta-nicotinamide D-nucleotide.. DNA ligase that catalyzes the formation of phosphodiester linkages between 5'-phosphoryl and 3'-hydroxyl groups in double-stranded DNA using NAD as a coenzyme and as the energy source for the reaction. It is essential for DNA replication and repair of damaged DNA. The sequence is that of DNA ligase from Streptococcus pneumoniae serotype 4 (strain ATCC BAA-334 / TIGR4).